A 283-amino-acid chain; its full sequence is Pantothenate synthetase (283 aa).

26–33 (MGNLHEGH) contacts ATP. Residue histidine 33 is the Proton donor of the active site. Glutamine 57 is a (R)-pantoate binding site. Glutamine 57 contacts beta-alanine. Residue 148–151 (GKKD) participates in ATP binding. Glutamine 154 provides a ligand contact to (R)-pantoate. 185–188 (LSSR) provides a ligand contact to ATP.

The protein belongs to the pantothenate synthetase family. In terms of assembly, homodimer.

Its subcellular location is the cytoplasm. It catalyses the reaction (R)-pantoate + beta-alanine + ATP = (R)-pantothenate + AMP + diphosphate + H(+). Its pathway is cofactor biosynthesis; (R)-pantothenate biosynthesis; (R)-pantothenate from (R)-pantoate and beta-alanine: step 1/1. Functionally, catalyzes the condensation of pantoate with beta-alanine in an ATP-dependent reaction via a pantoyl-adenylate intermediate. The sequence is that of Pantothenate synthetase from Polaromonas naphthalenivorans (strain CJ2).